The following is a 366-amino-acid chain: Phospho-N-acetylmuramoyl-pentapeptide-transferase (366 aa).

The next 10 helical transmembrane spans lie at 3–23, 52–72, 80–100, 120–140, 161–181, 197–217, 238–258, 262–282, 287–307, and 341–361; these read QIIIAGAVGLLVSIFVTPVLI, MGGIAILIGITVAYAVTGIVG, LTASGLLVLGLTLALGGLGFA, LIGQLAISLIFGALILLFPNA, LAIGPKAVGIAIFLLFIYILI, LAAGSTAIVMGTYTVITFWQF, LAILAAAGLGACLGFLWWNAA, IFMGDTGSLALGGLVAGLSVA, LLMIIVGALFVLEAASVVIQV, and FWLIAAVAALIGASIFYGEWL.

The protein belongs to the glycosyltransferase 4 family. MraY subfamily. Requires Mg(2+) as cofactor.

It is found in the cell membrane. The catalysed reaction is UDP-N-acetyl-alpha-D-muramoyl-L-alanyl-gamma-D-glutamyl-meso-2,6-diaminopimeloyl-D-alanyl-D-alanine + di-trans,octa-cis-undecaprenyl phosphate = di-trans,octa-cis-undecaprenyl diphospho-N-acetyl-alpha-D-muramoyl-L-alanyl-D-glutamyl-meso-2,6-diaminopimeloyl-D-alanyl-D-alanine + UMP. It participates in cell wall biogenesis; peptidoglycan biosynthesis. Catalyzes the initial step of the lipid cycle reactions in the biosynthesis of the cell wall peptidoglycan: transfers peptidoglycan precursor phospho-MurNAc-pentapeptide from UDP-MurNAc-pentapeptide onto the lipid carrier undecaprenyl phosphate, yielding undecaprenyl-pyrophosphoryl-MurNAc-pentapeptide, known as lipid I. The polypeptide is Phospho-N-acetylmuramoyl-pentapeptide-transferase (Corynebacterium diphtheriae (strain ATCC 700971 / NCTC 13129 / Biotype gravis)).